Here is a 657-residue protein sequence, read N- to C-terminus: Splicing factor Cactin (657 aa).

The segment covering 1 to 15 has biased composition (basic residues); it reads MGKDSKKHKKERRRE. 3 disordered regions span residues 1 to 83, 369 to 406, and 472 to 503; these read MGKD…EDTL, QESEELLPVAEVPPQVKIQKEEEEEEEEDEDDEKISKK, and ADVDNLTERRNRNRGTLPSSSAASSGAPQGAS. Coiled-coil stretches lie at residues 23 to 77 and 352 to 403; these read SDEE…RKDA and RLQL…DEKI. A compositionally biased stretch (basic and acidic residues) spans 26–60; it reads ERLQKRLAEQRSLKKDEKRRQKEEMKKNESAEEKR. Over residues 61 to 72 the composition is skewed to basic residues; sequence ARRMEKKMRKDA. Over residues 389–401 the composition is skewed to acidic residues; it reads EEEEEEEEDEDDE. A compositionally biased stretch (low complexity) spans 489–503; that stretch reads PSSSAASSGAPQGAS.

Belongs to the CACTIN family. As to expression, expressed in pharynx, intestine, vulva and spermatheca (at protein level).

It localises to the nucleus. Its subcellular location is the cytoplasm. In terms of biological role, plays a role in pre-mRNA splicing by facilitating excision of a subset of introns. Plays a role during early embryonic development. Required for the distal tip cell migration at the end of larval development and for gonad morphogenesis. In Caenorhabditis elegans, this protein is Splicing factor Cactin (cacn-1).